We begin with the raw amino-acid sequence, 142 residues long: Universal stress protein G (142 aa).

The protein belongs to the universal stress protein A family.

The protein is Universal stress protein G (uspG) of Shigella flexneri.